A 395-amino-acid polypeptide reads, in one-letter code: Flap endonuclease 1 (395 aa).

An N-domain region spans residues 1–104; sequence MGIKHLYQVI…GELAKRFMRK (104 aa). Asp34 lines the Mg(2+) pocket. 2 residues coordinate DNA: Arg47 and Arg70. Mg(2+) is bound by residues Asp86, Glu158, Glu160, Asp179, and Asp181. Residues 122-253 are I-domain; the sequence is DVEKFSRRTV…NTALKLIRDH (132 aa). A DNA-binding site is contributed by Glu158. DNA contacts are provided by Gly231 and Asp233. Position 233 (Asp233) interacts with Mg(2+). Positions 341 to 349 are interaction with PCNA; sequence QQSRLEGFF. A compositionally biased stretch (basic and acidic residues) spans 357–389; it reads QEKATLKRKHEEKLELQKKKKKEEAKAKKEAKS. The segment at 357–395 is disordered; sequence QEKATLKRKHEEKLELQKKKKKEEAKAKKEAKSKPRGAV.

The protein belongs to the XPG/RAD2 endonuclease family. FEN1 subfamily. Interacts with PCNA. Three molecules of FEN1 bind to one PCNA trimer with each molecule binding to one PCNA monomer. PCNA stimulates the nuclease activity without altering cleavage specificity. The cofactor is Mg(2+). Phosphorylated. Phosphorylation upon DNA damage induces relocalization to the nuclear plasma.

It is found in the nucleus. Its subcellular location is the nucleolus. The protein localises to the nucleoplasm. It localises to the mitochondrion. Functionally, structure-specific nuclease with 5'-flap endonuclease and 5'-3' exonuclease activities involved in DNA replication and repair. During DNA replication, cleaves the 5'-overhanging flap structure that is generated by displacement synthesis when DNA polymerase encounters the 5'-end of a downstream Okazaki fragment. It enters the flap from the 5'-end and then tracks to cleave the flap base, leaving a nick for ligation. Also involved in the long patch base excision repair (LP-BER) pathway, by cleaving within the apurinic/apyrimidinic (AP) site-terminated flap. Acts as a genome stabilization factor that prevents flaps from equilibrating into structures that lead to duplications and deletions. Also possesses 5'-3' exonuclease activity on nicked or gapped double-stranded DNA, and exhibits RNase H activity. Also involved in replication and repair of rDNA and in repairing mitochondrial DNA. This is Flap endonuclease 1 from Ajellomyces dermatitidis (strain ER-3 / ATCC MYA-2586) (Blastomyces dermatitidis).